We begin with the raw amino-acid sequence, 173 residues long: Propanediol dehydratase small subunit (173 aa).

The protein belongs to the diol/glycerol dehydratase small subunit family. The propanediol dehydratase enzyme is a heterotrimeric complex composed of a large (PduC), a medium (PduD) and a small (PduE) subunit. It depends on adenosylcob(III)alamin as a cofactor.

The protein localises to the bacterial microcompartment. The enzyme catalyses propane-1,2-diol = propanal + H2O. It participates in polyol metabolism; 1,2-propanediol degradation. Its activity is regulated as follows. Inhibited by glycerol. Its function is as follows. Part of the PduCDE complex that catalyzes the dehydration of 1,2-propanediol (1,2-PD) to propionaldehyde. Required for S.typhimurium growth on 1,2-PD as the sole carbon and energy source. Localized in the bacterial microcompartment (BMC) dedicated to 1,2-PD degradation. Functionally, the 1,2-PD-specific bacterial microcompartment (BMC) concentrates low levels of 1,2-PD catabolic enzymes, concentrates volatile reaction intermediates thus enhancing pathway flux and keeps the level of toxic, mutagenic propionaldehyde low. The sequence is that of Propanediol dehydratase small subunit from Salmonella typhimurium (strain LT2 / SGSC1412 / ATCC 700720).